The following is a 183-amino-acid chain: Small ribosomal subunit protein uS5 (183 aa).

An S5 DRBM domain is found at 11 to 71; that stretch reads FLERVVGINR…EEAKKSFFRV (61 aa).

This sequence belongs to the universal ribosomal protein uS5 family. Part of the 30S ribosomal subunit. Contacts proteins S4 and S8.

Functionally, with S4 and S12 plays an important role in translational accuracy. Its function is as follows. Located at the back of the 30S subunit body where it stabilizes the conformation of the head with respect to the body. The polypeptide is Small ribosomal subunit protein uS5 (Micrococcus luteus (Micrococcus lysodeikticus)).